Consider the following 183-residue polypeptide: Glutathione-regulated potassium-efflux system ancillary protein KefG (183 aa).

It belongs to the NAD(P)H dehydrogenase (quinone) family. KefG subfamily. As to quaternary structure, interacts with KefB.

It localises to the cell inner membrane. It carries out the reaction a quinone + NADH + H(+) = a quinol + NAD(+). The catalysed reaction is a quinone + NADPH + H(+) = a quinol + NADP(+). Functionally, regulatory subunit of a potassium efflux system that confers protection against electrophiles. Required for full activity of KefB. This chain is Glutathione-regulated potassium-efflux system ancillary protein KefG, found in Salmonella paratyphi B (strain ATCC BAA-1250 / SPB7).